Consider the following 145-residue polypeptide: Synaptojanin-2-binding protein (145 aa).

Residues 1-117 (MNGRVDYLVT…VHRGEGEPSG (117 aa)) are Cytoplasmic-facing. The 88-residue stretch at 13–100 (EINLTRGPSG…AVSLRVQHRL (88 aa)) folds into the PDZ domain. The chain crosses the membrane as a helical; Anchor for type IV membrane protein span at residues 118–138 (VPVAMVLLPVFALTMVAVWAF). The Mitochondrial intermembrane segment spans residues 139-145 (VRYRKQL).

In terms of assembly, binds (via the PDZ domain) to isoform 2A of SYNJ2 (via the unique motif in the C-terminus). Interacts (via C-terminus) with RALBP1. Interacts (via PDZ domain) with ACVR2A (via C-terminus) and ACVR2B (via C-terminus). Forms a ternary complex with ACVR2A and RALBP1. Interacts with MAPK12. Interacts with DLL1; enhances DLL1 protein stability, and promotes notch signaling in endothelial cells. In terms of tissue distribution, isoform 1 and isoform 2 are widely expressed, notably in brain, heart, lung, liver, kidney, skeletal muscle, ovary and testis. Isoform 3 is detected only in heart, spleen and testis.

The protein localises to the mitochondrion outer membrane. The protein resides in the cytoplasm. It is found in the perinuclear region. Functionally, isoform 1 regulates endocytosis of activin type 2 receptor kinases through the Ral/RALBP1-dependent pathway and may be involved in suppression of activin-induced signal transduction. Isoform 2 and isoform 3 show a stimulatory affect on activin-induced signal transduction and enhance activin type 2 expression at the cell surface. This chain is Synaptojanin-2-binding protein, found in Mus musculus (Mouse).